A 69-amino-acid polypeptide reads, in one-letter code: Metallothionein-like protein CRS5 (69 aa).

Belongs to the metallothionein superfamily. Type 13 family.

Critical role in copper (specific) homeostasis and detoxification. May protect by directly chelating and sequestering copper ions. In Saccharomyces cerevisiae (strain RM11-1a) (Baker's yeast), this protein is Metallothionein-like protein CRS5 (CRS5).